A 296-amino-acid chain; its full sequence is Protoheme IX farnesyltransferase (296 aa).

The next 9 membrane-spanning stretches (helical) occupy residues 8 to 28 (VTKP…FLLA), 35 to 55 (YPLF…GCVF), 84 to 104 (VSLV…YIGA), 107 to 127 (LAMW…SLYM), 132 to 152 (VYGT…GYCA), 162 to 182 (LILL…IAIF), 208 to 228 (ITVY…GGYA), 229 to 249 (GYKY…MALR), and 263 to 283 (LFVF…IDFS).

This sequence belongs to the UbiA prenyltransferase family. Protoheme IX farnesyltransferase subfamily.

Its subcellular location is the cell inner membrane. The enzyme catalyses heme b + (2E,6E)-farnesyl diphosphate + H2O = Fe(II)-heme o + diphosphate. It functions in the pathway porphyrin-containing compound metabolism; heme O biosynthesis; heme O from protoheme: step 1/1. In terms of biological role, converts heme B (protoheme IX) to heme O by substitution of the vinyl group on carbon 2 of heme B porphyrin ring with a hydroxyethyl farnesyl side group. The chain is Protoheme IX farnesyltransferase from Serratia proteamaculans (strain 568).